The sequence spans 183 residues: Endoribonuclease YbeY (183 aa).

Positions 142, 146, and 152 each coordinate Zn(2+).

It belongs to the endoribonuclease YbeY family. Zn(2+) is required as a cofactor.

It is found in the cytoplasm. Its function is as follows. Single strand-specific metallo-endoribonuclease involved in late-stage 70S ribosome quality control and in maturation of the 3' terminus of the 16S rRNA. This chain is Endoribonuclease YbeY, found in Trichodesmium erythraeum (strain IMS101).